A 149-amino-acid chain; its full sequence is Large ribosomal subunit protein bL9 (149 aa).

Belongs to the bacterial ribosomal protein bL9 family.

Functionally, binds to the 23S rRNA. The chain is Large ribosomal subunit protein bL9 from Salmonella dublin (strain CT_02021853).